We begin with the raw amino-acid sequence, 145 residues long: MLNPSRYRILAIGKTRKAWIQNGLNLYIKRLPGLTITELKDSDLKKEAQSIRSSIKTNELLIILTEEGESLTSLGFANRLKSLGSSRLLFVIGSANGLDSEIKAMANWSISLSPLTFPHEIARLLLIEQLYRAKNICEGGSYHRN.

S-adenosyl-L-methionine contacts are provided by residues Leu64, Gly93, and 112-117; that span reads LSPLTF.

The protein belongs to the RNA methyltransferase RlmH family. As to quaternary structure, homodimer.

The protein localises to the cytoplasm. It catalyses the reaction pseudouridine(1915) in 23S rRNA + S-adenosyl-L-methionine = N(3)-methylpseudouridine(1915) in 23S rRNA + S-adenosyl-L-homocysteine + H(+). Specifically methylates the pseudouridine at position 1915 (m3Psi1915) in 23S rRNA. The polypeptide is Ribosomal RNA large subunit methyltransferase H (Prochlorococcus marinus (strain MIT 9211)).